Consider the following 743-residue polypeptide: ABC-type transporter claG (743 aa).

2 N-linked (GlcNAc...) asparagine glycosylation sites follow: Asn-4 and Asn-30. A helical membrane pass occupies residues 124–144 (SILLDIFLVIVVSWPFPFAWI). Asn-159 carries N-linked (GlcNAc...) asparagine glycosylation. The ABC transporter domain occupies 200–439 (VEFSGISMRP…FQDAGYTFPL (240 aa)). Residue 234 to 241 (GPSGSGKS) participates in ATP binding. 5 helical membrane-spanning segments follow: residues 507–527 (YPSF…IGLS), 560–580 (GMLL…KTFG), 611–631 (IFLS…PIVS), 636–656 (LIVN…ISAI), and 661–681 (NGPL…GCAP).

Belongs to the ABC transporter superfamily. ABCG family.

Its subcellular location is the membrane. Functionally, ABC-type transporter; part of the cla gene cluster that produces clavatol and ortho-quinone methide. The clavatol biosynthesis cluster cla and the terrestric acid cluster tra are both involved in the production of peniphenones and penilactones. In Penicillium crustosum (Blue mold fungus), this protein is ABC-type transporter claG.